A 434-amino-acid chain; its full sequence is Beta-enolase (434 aa).

Residue serine 2 is modified to N-acetylserine. Residues histidine 158 and glutamate 167 each contribute to the substrate site. Catalysis depends on glutamate 210, which acts as the Proton donor. 3 residues coordinate Mg(2+): aspartate 245, glutamate 293, and aspartate 318. Substrate contacts are provided by glutamate 293 and aspartate 318. The Proton acceptor role is filled by lysine 343. Substrate-binding positions include 370 to 373 (SHRS) and lysine 394.

It belongs to the enolase family. In terms of assembly, homodimer. Interacts with PNKD. Mg(2+) is required as a cofactor.

It localises to the cytoplasm. It carries out the reaction (2R)-2-phosphoglycerate = phosphoenolpyruvate + H2O. It functions in the pathway carbohydrate degradation; glycolysis; pyruvate from D-glyceraldehyde 3-phosphate: step 4/5. In terms of biological role, glycolytic enzyme that catalyzes the conversion of 2-phosphoglycerate to phosphoenolpyruvate. The polypeptide is Beta-enolase (ENO3) (Gallus gallus (Chicken)).